Consider the following 261-residue polypeptide: Adenosylcobinamide-GDP ribazoletransferase (261 aa).

A run of 5 helical transmembrane segments spans residues 31 to 51 (YAIC…FLTF), 59 to 79 (LGDI…SGGI), 125 to 145 (FGMV…FFVV), 183 to 203 (VIYL…LTVV), and 240 to 260 (LMAG…TGHW).

This sequence belongs to the CobS family. Requires Mg(2+) as cofactor.

It is found in the cell membrane. It carries out the reaction alpha-ribazole + adenosylcob(III)inamide-GDP = adenosylcob(III)alamin + GMP + H(+). It catalyses the reaction alpha-ribazole 5'-phosphate + adenosylcob(III)inamide-GDP = adenosylcob(III)alamin 5'-phosphate + GMP + H(+). It participates in cofactor biosynthesis; adenosylcobalamin biosynthesis; adenosylcobalamin from cob(II)yrinate a,c-diamide: step 7/7. In terms of biological role, joins adenosylcobinamide-GDP and alpha-ribazole to generate adenosylcobalamin (Ado-cobalamin). Also synthesizes adenosylcobalamin 5'-phosphate from adenosylcobinamide-GDP and alpha-ribazole 5'-phosphate. The protein is Adenosylcobinamide-GDP ribazoletransferase of Lachnoclostridium phytofermentans (strain ATCC 700394 / DSM 18823 / ISDg) (Clostridium phytofermentans).